The primary structure comprises 332 residues: Procathepsin L (332 aa).

The N-terminal stretch at 1-17 (MHPLLFLAGLCLGVASA) is a signal peptide. A propeptide spans 18 to 112 (APQLYQSLDA…KVFQAPFFVE (95 aa)) (activation peptide). Glu-121 is a Zn(2+) binding site. Cys-137 is an active-site residue. The Zn(2+) site is built by Glu-162, Asp-183, Glu-198, and Asp-208. The cysteines at positions 168 and 210 are disulfide-linked. An N-linked (GlcNAc...) asparagine glycan is attached at Asn-220. Asp-226, Asp-249, Asp-272, and Asp-274 together coordinate Zn(2+). Cys-268 and Cys-321 are disulfide-bonded. Residue His-275 is part of the active site. Positions 288–290 (ETE) are excised as a propeptide. The active site involves Asn-299.

This sequence belongs to the peptidase C1 family. Dimer of a heavy and a light chain linked by disulfide bonds. Interacts with Long isoform of CD74/Ii chain; the interaction stabilizes the conformation of mature CTSL. In terms of processing, during export along the endocytic pathway, pro-CTSL undergoes several proteolytic cleavages to generate the CTSL single-chain and two-chain mature forms, composed of a heavy chain linked to a light chain by disulfide bonds. Autocleavage; produces the single-chain CTSL after cleavage of the propeptide. The cleavage can be intermolecular. As to expression, expressed in the endometrium.

It is found in the lysosome. The protein localises to the apical cell membrane. It localises to the cytoplasmic vesicle. The protein resides in the secretory vesicle. Its subcellular location is the chromaffin granule. It is found in the secreted. The protein localises to the extracellular space. The enzyme catalyses Specificity close to that of papain. As compared to cathepsin B, cathepsin L exhibits higher activity toward protein substrates, but has little activity on Z-Arg-Arg-NHMec, and no peptidyl-dipeptidase activity.. Inhibited by the propeptide produced by autocleavage. Long isoform of CD74/Ii chain stabilizes the conformation of mature CTSL by binding to its active site and serving as a chaperone to help maintain a pool of mature enzyme in endocytic compartments and extracellular space of APCs. IFNG enhances the conversion into the CTSL mature and active form. Inhibited by CST6. Inhibited by the glycopeptide antibiotic teicoplanin. Inhibited by amantadine. In terms of biological role, thiol protease important for the overall degradation of proteins in lysosomes. Plays a critical for normal cellular functions such as general protein turnover, antigen processing and bone remodeling. Involved in the solubilization of cross-linked TG/thyroglobulin and in the subsequent release of thyroid hormone thyroxine (T4) by limited proteolysis of TG/thyroglobulin in the thyroid follicle lumen. In neuroendocrine chromaffin cells secretory vesicles, catalyzes the prohormone proenkephalin processing to the active enkephalin peptide neurotransmitter. In thymus, regulates CD4(+) T cell positive selection by generating the major histocompatibility complex class II (MHCII) bound peptide ligands presented by cortical thymic epithelial cells. Also mediates invariant chain processing in cortical thymic epithelial cells. Major elastin-degrading enzyme at neutral pH. Accumulates as a mature and active enzyme in the extracellular space of antigen presenting cells (APCs) to regulate degradation of the extracellular matrix in the course of inflammation. Secreted form generates endostatin from COL18A1. Critical for cardiac morphology and function. Plays an important role in hair follicle morphogenesis and cycling, as well as epidermal differentiation. Required for maximal stimulation of steroidogenesis by TIMP1. In Felis catus (Cat), this protein is Procathepsin L (CTSL).